The sequence spans 529 residues: Listeriolysin O (529 aa).

Residues 1–24 form the signal peptide; sequence MKKIMLVFITLILVSLPIAQQTEA. 4 consecutive transmembrane segments (beta stranded) span residues 214-227, 234-243, 312-321, and 329-341; these read ESQL…AFKA, VNFGAISEGK, STKVKAAFDA, and SGDV…IKNS. Positions 483–493 match the Conserved undecapeptide motif; the sequence is ECTGLAWEWWR. Positions 515–516 match the Cholesterol binding motif; that stretch reads TL.

The protein belongs to the cholesterol-dependent cytolysin family. Homooligomeric pore complex of 35 to 50 subunits; when inserted in the host membrane.

It is found in the secreted. The protein localises to the host membrane. It localises to the host cell membrane. Activity of listeriolysin O is regulated on multiple levels. It should be high in the phagosome, thereby allowing escape of the bacteria from the phagosomal compartment. Then, once inside the host cytosol, the activity must be controlled to prevent lysis of the host plasma membrane and loss of the intracellular environment. Functionally, a cholesterol-dependent toxin that causes cytolysis by forming pores in cholesterol containing host membranes. After binding to target membranes, the protein undergoes a major conformation change, leading to its insertion in the host membrane and formation of an oligomeric pore complex. Cholesterol is required for binding to host membranes, membrane insertion and pore formation; cholesterol binding is mediated by a Thr-Leu pair in the C-terminus. Acts as a major virulence factor required for the escape of bacteria from phagosomal vacuoles and entry into the host cytosol. Can be reversibly inactivated by oxidation. This chain is Listeriolysin O (hly), found in Listeria monocytogenes serotype 4b (strain CLIP80459).